Here is a 531-residue protein sequence, read N- to C-terminus: 2,3-bisphosphoglycerate-independent phosphoglycerate mutase (531 aa).

The Mn(2+) site is built by D13 and S63. The active-site Phosphoserine intermediate is the S63. Substrate-binding positions include H124, 154–155, R187, R193, 261–264, and K342; these read RD and RPDR. 5 residues coordinate Mn(2+): D420, H424, D462, H463, and H480.

This sequence belongs to the BPG-independent phosphoglycerate mutase family. As to quaternary structure, monomer. The cofactor is Mn(2+).

The catalysed reaction is (2R)-2-phosphoglycerate = (2R)-3-phosphoglycerate. The protein operates within carbohydrate degradation; glycolysis; pyruvate from D-glyceraldehyde 3-phosphate: step 3/5. In terms of biological role, catalyzes the interconversion of 2-phosphoglycerate and 3-phosphoglycerate. This is 2,3-bisphosphoglycerate-independent phosphoglycerate mutase from Mycoplasma capricolum subsp. capricolum (strain California kid / ATCC 27343 / NCTC 10154).